A 216-amino-acid polypeptide reads, in one-letter code: MSVAIVDYGSGNLHSAAKAFERAARSMENPEPILVTRDPDQVFRADRVVLPGVGAFADCRKGLDSIDGMVQALNETVRDKARPFFGICVGMQLMATRGKEHVTTDGLNWIAGDVVKIAPDREDLKIPHMGWNTLDPVREHPVLEKLPLGPKGLHAYFVHSFHLAAEHEGDVLARADYGGPVTAVVGKDTAIGTQFHPEKSQRFGLALISNFLKWKP.

The Glutamine amidotransferase type-1 domain occupies 2-216 (SVAIVDYGSG…LISNFLKWKP (215 aa)). Cys-88 serves as the catalytic Nucleophile. Catalysis depends on residues His-196 and Glu-198.

In terms of assembly, heterodimer of HisH and HisF.

The protein resides in the cytoplasm. The enzyme catalyses 5-[(5-phospho-1-deoxy-D-ribulos-1-ylimino)methylamino]-1-(5-phospho-beta-D-ribosyl)imidazole-4-carboxamide + L-glutamine = D-erythro-1-(imidazol-4-yl)glycerol 3-phosphate + 5-amino-1-(5-phospho-beta-D-ribosyl)imidazole-4-carboxamide + L-glutamate + H(+). It carries out the reaction L-glutamine + H2O = L-glutamate + NH4(+). It functions in the pathway amino-acid biosynthesis; L-histidine biosynthesis; L-histidine from 5-phospho-alpha-D-ribose 1-diphosphate: step 5/9. IGPS catalyzes the conversion of PRFAR and glutamine to IGP, AICAR and glutamate. The HisH subunit catalyzes the hydrolysis of glutamine to glutamate and ammonia as part of the synthesis of IGP and AICAR. The resulting ammonia molecule is channeled to the active site of HisF. This Rhodopseudomonas palustris (strain ATCC BAA-98 / CGA009) protein is Imidazole glycerol phosphate synthase subunit HisH.